A 500-amino-acid polypeptide reads, in one-letter code: Probable cytosol aminopeptidase (500 aa).

The Mn(2+) site is built by lysine 264 and aspartate 269. Lysine 276 is an active-site residue. Aspartate 287, aspartate 346, and glutamate 348 together coordinate Mn(2+). Residue arginine 350 is part of the active site.

It belongs to the peptidase M17 family. Mn(2+) serves as cofactor.

It localises to the cytoplasm. The catalysed reaction is Release of an N-terminal amino acid, Xaa-|-Yaa-, in which Xaa is preferably Leu, but may be other amino acids including Pro although not Arg or Lys, and Yaa may be Pro. Amino acid amides and methyl esters are also readily hydrolyzed, but rates on arylamides are exceedingly low.. It carries out the reaction Release of an N-terminal amino acid, preferentially leucine, but not glutamic or aspartic acids.. Presumably involved in the processing and regular turnover of intracellular proteins. Catalyzes the removal of unsubstituted N-terminal amino acids from various peptides. This chain is Probable cytosol aminopeptidase, found in Chlamydia abortus (strain DSM 27085 / S26/3) (Chlamydophila abortus).